Here is a 327-residue protein sequence, read N- to C-terminus: MQASSLAAVSSASPSAPARRWTVEEVLGLYDMPLMDLIWRAQGVHRENFDPNAIQRSTLLSVKTGGCSEDCSYCSQSARYDTDTERERLMPLDQVVAAAKAAKDKGASRFCMGAAWKGPKDNDLDRVLDMVREVKALGMQTCVTLGMLKDGQAEKLKDAGLDYYNHNLDTDKEFYGQVIKSHTHDDRLDTLDQVRDAGINVCSGGIIGMGESRKNRAALIVQLANLPKPPESVPINNLVPIPGTPLADNPRLDPFEFVRTIAAARIAMPTSWVRLSAGRQEMSDELQAMCFLAGANSMFYGDFLLTTGNPDIERDDALFARLGVKAI.

A Radical SAM core domain is found at 52–279 (NAIQRSTLLS…TSWVRLSAGR (228 aa)). Residues Cys67, Cys71, and Cys74 each contribute to the [4Fe-4S] cluster site. The [2Fe-2S] cluster site is built by Cys111, Cys142, Cys202, and Arg274.

Belongs to the radical SAM superfamily. Biotin synthase family. As to quaternary structure, homodimer. [4Fe-4S] cluster is required as a cofactor. It depends on [2Fe-2S] cluster as a cofactor.

It carries out the reaction (4R,5S)-dethiobiotin + (sulfur carrier)-SH + 2 reduced [2Fe-2S]-[ferredoxin] + 2 S-adenosyl-L-methionine = (sulfur carrier)-H + biotin + 2 5'-deoxyadenosine + 2 L-methionine + 2 oxidized [2Fe-2S]-[ferredoxin]. It functions in the pathway cofactor biosynthesis; biotin biosynthesis; biotin from 7,8-diaminononanoate: step 2/2. Its function is as follows. Catalyzes the conversion of dethiobiotin (DTB) to biotin by the insertion of a sulfur atom into dethiobiotin via a radical-based mechanism. In Dechloromonas aromatica (strain RCB), this protein is Biotin synthase.